Here is a 74-residue protein sequence, read N- to C-terminus: Small ribosomal subunit protein bS18 (74 aa).

The protein belongs to the bacterial ribosomal protein bS18 family. Part of the 30S ribosomal subunit. Forms a tight heterodimer with protein bS6.

Functionally, binds as a heterodimer with protein bS6 to the central domain of the 16S rRNA, where it helps stabilize the platform of the 30S subunit. The chain is Small ribosomal subunit protein bS18 from Sphingopyxis alaskensis (strain DSM 13593 / LMG 18877 / RB2256) (Sphingomonas alaskensis).